Here is a 262-residue protein sequence, read N- to C-terminus: NADPH-dependent 7-cyano-7-deazaguanine reductase (262 aa).

69–71 provides a ligand contact to substrate; that stretch reads IES. 71–72 provides a ligand contact to NADPH; that stretch reads SK. Cys-170 (thioimide intermediate) is an active-site residue. The Proton donor role is filled by Asp-177. 209–210 is a substrate binding site; it reads HE. 238-239 serves as a coordination point for NADPH; that stretch reads RG.

It belongs to the GTP cyclohydrolase I family. QueF type 2 subfamily. Homodimer.

It localises to the cytoplasm. It catalyses the reaction 7-aminomethyl-7-carbaguanine + 2 NADP(+) = 7-cyano-7-deazaguanine + 2 NADPH + 3 H(+). It participates in tRNA modification; tRNA-queuosine biosynthesis. In terms of biological role, catalyzes the NADPH-dependent reduction of 7-cyano-7-deazaguanine (preQ0) to 7-aminomethyl-7-deazaguanine (preQ1). The sequence is that of NADPH-dependent 7-cyano-7-deazaguanine reductase from Buchnera aphidicola subsp. Schizaphis graminum (strain Sg).